Here is a 323-residue protein sequence, read N- to C-terminus: PI-PLC X domain-containing protein 1 (323 aa).

In terms of domain architecture, PI-PLC X-box spans 30-206 (RLWDVPLHHL…QVIVSYEDES (177 aa)).

In terms of tissue distribution, widely expressed.

Its subcellular location is the cytoplasm. The chain is PI-PLC X domain-containing protein 1 (PLCXD1) from Homo sapiens (Human).